The chain runs to 192 residues: Interleukin-18 (192 aa).

Residues 1 to 35 (MAAEPVEDNCISFVEMKFINNTLYFVAENGDLESD) constitute a propeptide that is removed on maturation.

This sequence belongs to the IL-1 family. Forms a ternary complex with ligand-binding receptor subunit IL18R1 and signaling receptor subunit IL18RAP at the plasma membrane. Mature IL18 first binds to IL18R1 forming a low affinity binary complex, which then interacts with IL18RAP to form a high affinity ternary complex that signals inside the cell. Interacts with cargo receptor TMED10; the interaction mediates the translocation from the cytoplasm into the ERGIC (endoplasmic reticulum-Golgi intermediate compartment) and thereby secretion. Post-translationally, the pro-IL-18 precursor is processed by CASP1, CASP4 or CASP5 to yield its mature, active form. The pro-IL-18 precursor features autoinhibitory interactions between the propeptide and the post-cleavage-site region, preventing recognition by the IL18R1 receptor. Processing by CASP1, CASP4 or CASP5 induces conformational changes to generate critical receptor-binding sites. The mature form is then secreted and released in the extracellular milieu by passing through the gasdermin-D (GSDMD) pore. In contrast, cleavage by CASP3 inactivates IL18.

The protein resides in the cytoplasm. It localises to the cytosol. Its subcellular location is the secreted. Pro-inflammatory cytokine primarily involved in epithelial barrier repair, polarized T-helper 1 (Th1) cell and natural killer (NK) cell immune responses. Upon binding to IL18R1 and IL18RAP, forms a signaling ternary complex which activates NF-kappa-B, triggering synthesis of inflammatory mediators. Synergizes with IL12/interleukin-12 to induce IFNG synthesis from T-helper 1 (Th1) cells and natural killer (NK) cells. Involved in transduction of inflammation downstream of pyroptosis: its mature form is specifically released in the extracellular milieu by passing through the gasdermin-D (GSDMD) pore. The polypeptide is Interleukin-18 (IL18) (Capra hircus (Goat)).